A 687-amino-acid chain; its full sequence is Glycine--tRNA ligase beta subunit (687 aa).

Belongs to the class-II aminoacyl-tRNA synthetase family. In terms of assembly, tetramer of two alpha and two beta subunits.

The protein resides in the cytoplasm. It catalyses the reaction tRNA(Gly) + glycine + ATP = glycyl-tRNA(Gly) + AMP + diphosphate. The protein is Glycine--tRNA ligase beta subunit of Neisseria meningitidis serogroup A / serotype 4A (strain DSM 15465 / Z2491).